Here is a 295-residue protein sequence, read N- to C-terminus: Glycine N-phenylacetyltransferase (295 aa).

Position 43 is an N6-acetyllysine (Lys-43). N6-acetyllysine; alternate is present on Lys-48. N6-succinyllysine; alternate is present on Lys-48. Lys-80 carries the post-translational modification N6-acetyllysine. The residue at position 182 (Lys-182) is an N6-acetyllysine; alternate. Position 182 is an N6-succinyllysine; alternate (Lys-182).

Belongs to the glycine N-acyltransferase family.

It is found in the mitochondrion. It carries out the reaction phenylacetyl-CoA + glycine = phenylacetylglycine + CoA + H(+). Mitochondrial acyltransferase which transfers the acyl group to the N-terminus of glycine. Can conjugate a multitude of substrates to form a variety of N-acylglycines. Catalyzes the conjugation of arylacetic acids with glycine but does not have activity towards any alkyl-CoA. This chain is Glycine N-phenylacetyltransferase, found in Bos taurus (Bovine).